The following is a 144-amino-acid chain: D-aminoacyl-tRNA deacylase (144 aa).

The short motif at 136–137 (GP) is the Gly-cisPro motif, important for rejection of L-amino acids element.

It belongs to the DTD family. As to quaternary structure, homodimer.

It is found in the cytoplasm. The catalysed reaction is glycyl-tRNA(Ala) + H2O = tRNA(Ala) + glycine + H(+). It carries out the reaction a D-aminoacyl-tRNA + H2O = a tRNA + a D-alpha-amino acid + H(+). Functionally, an aminoacyl-tRNA editing enzyme that deacylates mischarged D-aminoacyl-tRNAs. Also deacylates mischarged glycyl-tRNA(Ala), protecting cells against glycine mischarging by AlaRS. Acts via tRNA-based rather than protein-based catalysis; rejects L-amino acids rather than detecting D-amino acids in the active site. By recycling D-aminoacyl-tRNA to D-amino acids and free tRNA molecules, this enzyme counteracts the toxicity associated with the formation of D-aminoacyl-tRNA entities in vivo and helps enforce protein L-homochirality. The sequence is that of D-aminoacyl-tRNA deacylase from Glaesserella parasuis serovar 5 (strain SH0165) (Haemophilus parasuis).